The sequence spans 239 residues: Small ribosomal subunit protein uS3 (239 aa).

The region spanning 39 to 107 (VRQVLRKKMS…PVHINVIEVR (69 aa)) is the KH type-2 domain. The interval 214–239 (SQEKQDDGSRGDRNADRSSRRSREVR) is disordered. Residues 216–239 (EKQDDGSRGDRNADRSSRRSREVR) are compositionally biased toward basic and acidic residues.

It belongs to the universal ribosomal protein uS3 family. As to quaternary structure, part of the 30S ribosomal subunit. Forms a tight complex with proteins S10 and S14.

Its function is as follows. Binds the lower part of the 30S subunit head. Binds mRNA in the 70S ribosome, positioning it for translation. This is Small ribosomal subunit protein uS3 from Xylella fastidiosa (strain M23).